An 80-amino-acid polypeptide reads, in one-letter code: MPFRFGTQPRRFPVEGGDSSIELESGLSSSASCTGKETSPNRQLRRCPGSHCLTITDVPITVYATMRKPPAQSSKEMHPK.

Residues 1 to 45 are disordered; that stretch reads MPFRFGTQPRRFPVEGGDSSIELESGLSSSASCTGKETSPNRQLR. Over residues 15–32 the composition is skewed to low complexity; the sequence is EGGDSSIELESGLSSSAS. Polar residues predominate over residues 33–42; it reads CTGKETSPNR.

The protein belongs to the FAM229 family.

The polypeptide is Protein FAM229B (Fam229b) (Mus musculus (Mouse)).